Consider the following 513-residue polypeptide: MNKLAGAELSTLLEQRITNYYTKLQVDEIGRVVSVGDGIARVYGLNKIQAGEMVEFASGVKGMALNLENENVGIVIFGSDTAIKEGDIVKRTGSIVDVPVGKGMLGRVVDALGVPIDGKGALSAVERRRVEVKAPGIIARKSVHEPMQTGLKAVDSLVPIGRGQRELIIGDRQTGKTAIAIDTILNQKQINAQGTSDSEKLYCVYVAIGQKRSTVAQLVKILSEAGALEYSIIVAATASDPAPLQFLAPYSGCAMGEYFRDNGMHALIIYDDLSKQSVAYRQMSLLLRRPPGREAFPGDVFYLHSRLLERAAKMSDQTGAGSLTALPVIETQAGDVSAYIPTNVISITDGQIFLETELFYRGSRPAINVGLSVSRVGSAAQLKAMKQVCGSLKLELAQYREVAAFAQFGSDLDAATQYLLNRGARLTEILKQAQYSPIPIEKQIVVIYAAVKGYLDQIPVALITHYEQELLKSIDPGLLSAIVQQKNITEQISSQLATFCQKFTQSFLATHQS.

170-177 (GDRQTGKT) lines the ATP pocket.

Belongs to the ATPase alpha/beta chains family. In terms of assembly, F-type ATPases have 2 components, CF(1) - the catalytic core - and CF(0) - the membrane proton channel. CF(1) has five subunits: alpha(3), beta(3), gamma(1), delta(1), epsilon(1). CF(0) has three main subunits: a, b and c.

It is found in the mitochondrion. The protein localises to the mitochondrion inner membrane. Its function is as follows. Mitochondrial membrane ATP synthase (F(1)F(0) ATP synthase or Complex V) produces ATP from ADP in the presence of a proton gradient across the membrane which is generated by electron transport complexes of the respiratory chain. F-type ATPases consist of two structural domains, F(1) - containing the extramembraneous catalytic core, and F(0) - containing the membrane proton channel, linked together by a central stalk and a peripheral stalk. During catalysis, ATP synthesis in the catalytic domain of F(1) is coupled via a rotary mechanism of the central stalk subunits to proton translocation. Subunits alpha and beta form the catalytic core in F(1). Rotation of the central stalk against the surrounding alpha(3)beta(3) subunits leads to hydrolysis of ATP in three separate catalytic sites on the beta subunits. Subunit alpha does not bear the catalytic high-affinity ATP-binding sites. In Marchantia polymorpha (Common liverwort), this protein is ATP synthase subunit alpha, mitochondrial (ATPA).